We begin with the raw amino-acid sequence, 224 residues long: Uracil-DNA glycosylase 2 (224 aa).

Asp64 serves as the catalytic Proton acceptor.

This sequence belongs to the uracil-DNA glycosylase (UDG) superfamily. UNG family.

It localises to the cytoplasm. The enzyme catalyses Hydrolyzes single-stranded DNA or mismatched double-stranded DNA and polynucleotides, releasing free uracil.. Functionally, excises uracil residues from the DNA which can arise as a result of misincorporation of dUMP residues by DNA polymerase or due to deamination of cytosine. The polypeptide is Uracil-DNA glycosylase 2 (Listeria monocytogenes serotype 4b (strain F2365)).